We begin with the raw amino-acid sequence, 147 residues long: D-aminoacyl-tRNA deacylase (147 aa).

A Gly-cisPro motif, important for rejection of L-amino acids motif is present at residues Gly137–Pro138.

It belongs to the DTD family. In terms of assembly, homodimer.

The protein resides in the cytoplasm. It catalyses the reaction glycyl-tRNA(Ala) + H2O = tRNA(Ala) + glycine + H(+). The catalysed reaction is a D-aminoacyl-tRNA + H2O = a tRNA + a D-alpha-amino acid + H(+). In terms of biological role, an aminoacyl-tRNA editing enzyme that deacylates mischarged D-aminoacyl-tRNAs. Also deacylates mischarged glycyl-tRNA(Ala), protecting cells against glycine mischarging by AlaRS. Acts via tRNA-based rather than protein-based catalysis; rejects L-amino acids rather than detecting D-amino acids in the active site. By recycling D-aminoacyl-tRNA to D-amino acids and free tRNA molecules, this enzyme counteracts the toxicity associated with the formation of D-aminoacyl-tRNA entities in vivo and helps enforce protein L-homochirality. This Bacillus licheniformis (strain ATCC 14580 / DSM 13 / JCM 2505 / CCUG 7422 / NBRC 12200 / NCIMB 9375 / NCTC 10341 / NRRL NRS-1264 / Gibson 46) protein is D-aminoacyl-tRNA deacylase.